The sequence spans 187 residues: Undecaprenyl-diphosphatase (187 aa).

4 helical membrane passes run 13–33 (GLIE…LIIF), 45–65 (KVFE…VYFA), 85–105 (MAVI…HGVI), and 108–128 (VLFN…AILM).

The protein belongs to the UppP family.

Its subcellular location is the cell inner membrane. The catalysed reaction is di-trans,octa-cis-undecaprenyl diphosphate + H2O = di-trans,octa-cis-undecaprenyl phosphate + phosphate + H(+). In terms of biological role, catalyzes the dephosphorylation of undecaprenyl diphosphate (UPP). Confers resistance to bacitracin. The protein is Undecaprenyl-diphosphatase (uppP) of Azospirillum brasilense.